Reading from the N-terminus, the 722-residue chain is Polyribonucleotide nucleotidyltransferase (722 aa).

Mg(2+) contacts are provided by Asp487 and Asp493. Positions 554–613 (PRMVSFKIHPDKIREVIGKGGATIQALTKETGCSIDIKDDGTVTIASTSAEGMAEAKARI) constitute a KH domain. The 69-residue stretch at 623–691 (GKIYEGPVVK…ERGRLRLSLK (69 aa)) folds into the S1 motif domain.

It belongs to the polyribonucleotide nucleotidyltransferase family. It depends on Mg(2+) as a cofactor.

The protein localises to the cytoplasm. It carries out the reaction RNA(n+1) + phosphate = RNA(n) + a ribonucleoside 5'-diphosphate. Its function is as follows. Involved in mRNA degradation. Catalyzes the phosphorolysis of single-stranded polyribonucleotides processively in the 3'- to 5'-direction. This chain is Polyribonucleotide nucleotidyltransferase, found in Polynucleobacter asymbioticus (strain DSM 18221 / CIP 109841 / QLW-P1DMWA-1) (Polynucleobacter necessarius subsp. asymbioticus).